A 604-amino-acid chain; its full sequence is Phosphoprotein (604 aa).

Disordered regions lie at residues 1–22 (MESD…RDKS) and 39–360 (DPQE…EESN). Residues 22–42 (STNISSALNIIEFILSTDPQE) are N0 binding. Polar residues-rich tracts occupy residues 47–61 (NDTI…SATI) and 74–90 (KVSG…SSHE). Basic and acidic residues predominate over residues 91-101 (CTTEAKDRNID). The span at 129 to 144 (GSITDSKNGTQNTENI) shows a compositional bias: polar residues. Positions 147–163 (NEIRKMDKDSIERKMRQ) are enriched in basic and acidic residues. Over residues 197–207 (TPDTRSMSVVT) the composition is skewed to polar residues. Basic and acidic residues predominate over residues 245-267 (KGKDWFKKSRDTDNQTSTSDHKP). 2 stretches are compositionally biased toward low complexity: residues 277–300 (KTTT…ETQS) and 317–328 (TSTTPPTTTPRS). Basic and acidic residues predominate over residues 330-360 (RTKESIRTNSESKPKTQKTIGKERKDTEESN). The interval 400 to 470 (VDTASKIDFL…SLISNLKIMT (71 aa)) is multimerization. Residues 424 to 451 (LIQIQNEMLNLKADLKRMDESHRRLIEN) adopt a coiled-coil conformation. Residues 450-483 (ENQREQLSLITSLISNLKIMTERGGKKDQNESNE) are l protein binding. Positions 585–604 (KSDEEVSELMDMFNEDVNNC) are interaction with the nucleocapsid (N-RNA).

It belongs to the respirovirus P protein family. Homotetramer. Interacts (via multimerization domain) with polymerase L; this interaction forms the polymerase L-P complex. Interacts (via N-terminus) with N0; this interaction allows P to chaperon N0 to avoid N polymerization before encapsidation. Interacts (via C-terminus) with N-RNA template; this interaction positions the polymerase on the template. Interacts with host PI4KB; this interaction allows P to recruit PI4KB to the viral factories to generate PI4P to facilitate viral replication.

Functionally, essential cofactor of the RNA polymerase L that plays a central role in the transcription and replication by forming the polymerase complex with RNA polymerase L and recruiting L to the genomic N-RNA template for RNA synthesis. Also plays a central role in the encapsidation of nascent RNA chains by forming the encapsidation complex with the nucleocapsid protein N (N-P complex). Acts as a chaperone for newly synthesized free N protein, so-called N0, allowing encapsidation of nascent RNA chains during replication. The nucleoprotein protein N prevents excessive phosphorylation of P, which leads to down-regulation of viral transcription/ replication. Participates, together with N, in the formation of viral factories (viroplasms), which are large inclusions in the host cytoplasm where replication takes place. Recruits host PI4KB and remodel the host endoplasmic reticulum membrane to form viral replication factories. This Human parainfluenza 3 virus (strain Wash/47885/57) (HPIV-3) protein is Phosphoprotein (P/V/D).